The chain runs to 487 residues: NAD-dependent histone deacetylase HST3 (487 aa).

The region spanning Pro15 to Glu336 is the Deacetylase sirtuin-type domain. NAD(+) contacts are provided by residues Gly40–Tyr59 and Gln129–Asp132. The active-site Proton acceptor is the His167. The Zn(2+) site is built by Cys175, Cys178, Cys200, and Cys203. Residues Gly261–Ser263, Asn291–Thr293, and Cys312 contribute to the NAD(+) site. The segment covering Val397 to Pro406 has biased composition (basic and acidic residues). The interval Val397–His487 is disordered. The segment covering His415–Arg425 has biased composition (basic residues). Positions Asp448–Gly459 are enriched in polar residues.

It belongs to the sirtuin family. Class I subfamily. Requires Zn(2+) as cofactor.

It is found in the cytoplasm. The protein localises to the nucleus. The catalysed reaction is N(6)-acetyl-L-lysyl-[protein] + NAD(+) + H2O = 2''-O-acetyl-ADP-D-ribose + nicotinamide + L-lysyl-[protein]. In terms of biological role, NAD-dependent histone deacetylase, which could function in telomeric silencing, cell cycle progression and chromosome stability. In Candida albicans (strain SC5314 / ATCC MYA-2876) (Yeast), this protein is NAD-dependent histone deacetylase HST3 (HST3).